A 241-amino-acid polypeptide reads, in one-letter code: tRNA pseudouridine synthase B (241 aa).

Asp-45 acts as the Nucleophile in catalysis.

Belongs to the pseudouridine synthase TruB family. Type 1 subfamily.

It carries out the reaction uridine(55) in tRNA = pseudouridine(55) in tRNA. Its function is as follows. Responsible for synthesis of pseudouridine from uracil-55 in the psi GC loop of transfer RNAs. The polypeptide is tRNA pseudouridine synthase B (Chlamydia trachomatis serovar L2 (strain ATCC VR-902B / DSM 19102 / 434/Bu)).